The primary structure comprises 459 residues: Bifunctional protein GlmU (459 aa).

The tract at residues 1–229 (MSNFAIILAA…FDESLGVNDR (229 aa)) is pyrophosphorylase. Residues 8 to 11 (LAAG), lysine 22, glutamine 72, and 77 to 78 (GT) contribute to the UDP-N-acetyl-alpha-D-glucosamine site. Mg(2+) is bound at residue aspartate 102. UDP-N-acetyl-alpha-D-glucosamine is bound by residues glycine 139, glutamate 154, asparagine 169, and asparagine 227. Asparagine 227 lines the Mg(2+) pocket. Positions 230 to 250 (VALATAESVMRRRINHKHMVN) are linker. Positions 251 to 459 (GVSFVNPEAT…TRLPHHPKNQ (209 aa)) are N-acetyltransferase. 2 residues coordinate UDP-N-acetyl-alpha-D-glucosamine: arginine 332 and lysine 350. The active-site Proton acceptor is histidine 362. Residues tyrosine 365 and asparagine 376 each coordinate UDP-N-acetyl-alpha-D-glucosamine. Acetyl-CoA contacts are provided by residues alanine 379, 385–386 (NY), serine 404, alanine 422, and arginine 439.

The protein in the N-terminal section; belongs to the N-acetylglucosamine-1-phosphate uridyltransferase family. It in the C-terminal section; belongs to the transferase hexapeptide repeat family. Homotrimer. Mg(2+) serves as cofactor.

It is found in the cytoplasm. The enzyme catalyses alpha-D-glucosamine 1-phosphate + acetyl-CoA = N-acetyl-alpha-D-glucosamine 1-phosphate + CoA + H(+). It carries out the reaction N-acetyl-alpha-D-glucosamine 1-phosphate + UTP + H(+) = UDP-N-acetyl-alpha-D-glucosamine + diphosphate. The protein operates within nucleotide-sugar biosynthesis; UDP-N-acetyl-alpha-D-glucosamine biosynthesis; N-acetyl-alpha-D-glucosamine 1-phosphate from alpha-D-glucosamine 6-phosphate (route II): step 2/2. It participates in nucleotide-sugar biosynthesis; UDP-N-acetyl-alpha-D-glucosamine biosynthesis; UDP-N-acetyl-alpha-D-glucosamine from N-acetyl-alpha-D-glucosamine 1-phosphate: step 1/1. It functions in the pathway bacterial outer membrane biogenesis; LPS lipid A biosynthesis. In terms of biological role, catalyzes the last two sequential reactions in the de novo biosynthetic pathway for UDP-N-acetylglucosamine (UDP-GlcNAc). The C-terminal domain catalyzes the transfer of acetyl group from acetyl coenzyme A to glucosamine-1-phosphate (GlcN-1-P) to produce N-acetylglucosamine-1-phosphate (GlcNAc-1-P), which is converted into UDP-GlcNAc by the transfer of uridine 5-monophosphate (from uridine 5-triphosphate), a reaction catalyzed by the N-terminal domain. The sequence is that of Bifunctional protein GlmU from Streptococcus pneumoniae (strain Hungary19A-6).